The following is a 498-amino-acid chain: Glycerol kinase (498 aa).

Position 12 (threonine 12) interacts with ADP. Residues threonine 12, threonine 13, and serine 14 each contribute to the ATP site. Threonine 12 provides a ligand contact to sn-glycerol 3-phosphate. An ADP-binding site is contributed by arginine 16. Residues arginine 82, glutamate 83, tyrosine 134, and aspartate 243 each contribute to the sn-glycerol 3-phosphate site. Glycerol contacts are provided by arginine 82, glutamate 83, tyrosine 134, aspartate 243, and glutamine 244. The ADP site is built by threonine 265 and glycine 308. ATP is bound by residues threonine 265, glycine 308, glutamine 312, and glycine 409. ADP contacts are provided by glycine 409 and asparagine 413.

The protein belongs to the FGGY kinase family. As to quaternary structure, homotetramer and homodimer (in equilibrium).

It catalyses the reaction glycerol + ATP = sn-glycerol 3-phosphate + ADP + H(+). It participates in polyol metabolism; glycerol degradation via glycerol kinase pathway; sn-glycerol 3-phosphate from glycerol: step 1/1. Activated by phosphorylation and inhibited by fructose 1,6-bisphosphate (FBP). In terms of biological role, key enzyme in the regulation of glycerol uptake and metabolism. Catalyzes the phosphorylation of glycerol to yield sn-glycerol 3-phosphate. The chain is Glycerol kinase from Clostridium botulinum (strain Loch Maree / Type A3).